The sequence spans 149 residues: Large ribosomal subunit protein bL9 (149 aa).

Belongs to the bacterial ribosomal protein bL9 family.

Its function is as follows. Binds to the 23S rRNA. This is Large ribosomal subunit protein bL9 from Tolumonas auensis (strain DSM 9187 / NBRC 110442 / TA 4).